The sequence spans 444 residues: Bystin (444 aa).

Disordered regions lie at residues 1-37 and 53-85; these read MAKK…HQKQ and ALAQ…TAGE. Over residues 24–34 the composition is skewed to basic residues; the sequence is SRKRSKVPKTH. Positions 73–84 are enriched in low complexity; it reads AAFAVAGAATAG.

The protein belongs to the bystin family. In terms of assembly, component of the 40S pre-ribosome. As to expression, highly expressed in flowers and at lower levels in roots, hypocotyls, stems, leaves, siliques and seeds.

The protein resides in the nucleus. Its subcellular location is the nucleolus. It localises to the nucleoplasm. Functionally, essential protein required during embryogenesis and pollen development. Required for processing of 20S pre-rRNA precursor and biogenesis of 40S ribosomal subunits. The chain is Bystin from Arabidopsis thaliana (Mouse-ear cress).